Reading from the N-terminus, the 292-residue chain is Large ribosomal subunit protein uL18 (292 aa).

It belongs to the universal ribosomal protein uL18 family. As to quaternary structure, component of the large ribosomal subunit (LSU).

The protein resides in the cytoplasm. It is found in the nucleus. Its function is as follows. Component of the ribosome, a large ribonucleoprotein complex responsible for the synthesis of proteins in the cell. The small ribosomal subunit (SSU) binds messenger RNAs (mRNAs) and translates the encoded message by selecting cognate aminoacyl-transfer RNA (tRNA) molecules. The large subunit (LSU) contains the ribosomal catalytic site termed the peptidyl transferase center (PTC), which catalyzes the formation of peptide bonds, thereby polymerizing the amino acids delivered by tRNAs into a polypeptide chain. The nascent polypeptides leave the ribosome through a tunnel in the LSU and interact with protein factors that function in enzymatic processing, targeting, and the membrane insertion of nascent chains at the exit of the ribosomal tunnel. The sequence is that of Large ribosomal subunit protein uL18 (rpl5) from Dictyostelium discoideum (Social amoeba).